Consider the following 1898-residue polypeptide: Receptor-type tyrosine-protein phosphatase F (1898 aa).

Residues 1–29 form the signal peptide; sequence MAPEPAPGRRMVPLVPALVMLGLMAGAHG. Residues 30 to 1254 are Extracellular-facing; it reads DSKPVFVKVP…QQQEEPEMLW (1225 aa). Ig-like C2-type domains follow at residues 33–123, 135–224, and 232–314; these read PVFV…AKLS, PTID…ANLY, and PRFS…AQVT. A disulfide bond links Cys54 and Cys107. 68–77 contributes to the heparin binding site; it reads KKGKKVSSQR. An N-linked (GlcNAc...) asparagine glycan is attached at Asn117. A disulfide bridge connects residues Cys156 and Cys207. Asn250 and Asn295 each carry an N-linked (GlcNAc...) asparagine glycan. Residues Cys253 and Cys298 are joined by a disulfide bond. Fibronectin type-III domains are found at residues 321–411, 416–510, 514–604, 609–706, 711–810, 811–904, 909–1001, and 1005–1089; these read PPID…TGEQ, PPRR…TQQG, QPAD…TAQS, PPQK…TDED, PPRK…TTGA, VPGR…TPED, FPQN…TMPV, and FAKN…TAPD. The disordered stretch occupies residues 693–712; the sequence is GPESSPVLVRTDEDVPSGPP. Asn721 carries N-linked (GlcNAc...) asparagine glycosylation. N-linked (GlcNAc...) asparagine glycans are attached at residues Asn941, Asn957, and Asn960. The helical transmembrane segment at 1255–1275 threads the bilayer; that stretch reads VTGPVLAVILIILIVIAILLF. The Cytoplasmic portion of the chain corresponds to 1276 to 1898; the sequence is KRKRTHSPSS…YLGSFDHYAT (623 aa). At Ser1296 the chain carries Phosphoserine. Tyrosine-protein phosphatase domains follow at residues 1343-1598 and 1630-1889; these read FSQE…LLEA and MELE…ALEY. Substrate is bound by residues Asp1507, 1539–1545, and Gln1583; that span reads CSAGVGR. The active-site Phosphocysteine intermediate is Cys1539. Cys1830 functions as the Phosphocysteine intermediate in the catalytic mechanism.

It belongs to the protein-tyrosine phosphatase family. Receptor class 2A subfamily. In terms of assembly, interacts with GRIP1. Interacts with PPFIA1, PPFIA2 and PPFIA3. Interacts with PTPRF. In terms of tissue distribution, expressed in the cell of the T lineage but not in cells of any other hemopoietic lineage.

Its subcellular location is the membrane. The enzyme catalyses O-phospho-L-tyrosyl-[protein] + H2O = L-tyrosyl-[protein] + phosphate. Its function is as follows. Possible cell adhesion receptor. It possesses an intrinsic protein tyrosine phosphatase activity (PTPase) and dephosphorylates EPHA2 regulating its activity. The polypeptide is Receptor-type tyrosine-protein phosphatase F (Ptprf) (Mus musculus (Mouse)).